The chain runs to 520 residues: Cytochrome P450 4F8 (520 aa).

Residues 15–37 form a helical membrane-spanning segment; sequence AASPWLLLLVVGASWLLARILAW. Cysteine 468 contributes to the heme binding site.

It belongs to the cytochrome P450 family. Requires heme as cofactor. In terms of tissue distribution, expressed in the epithelium of seminal vesicles, in renal cortex, in adult and fetal liver, in epidermis, in corneal epithelium, in sweat glands, hair follicles, epithelial linings of the ampulla of vas deferens and of the stomach and small intestine, as well as in the transitional epithelium of the bladder and ureter (at protein level). In the epidermis, expressed from the basal cell to the granular cell layers. In the corneal epithelium, expressed in all cell layers. Also detected in prostate. Up-regulated in the epidermis of psoriatic lesions.

The protein resides in the endoplasmic reticulum membrane. It localises to the microsome membrane. The catalysed reaction is an organic molecule + reduced [NADPH--hemoprotein reductase] + O2 = an alcohol + oxidized [NADPH--hemoprotein reductase] + H2O + H(+). The enzyme catalyses (5Z,8Z,11Z,14Z)-eicosatetraenoate + reduced [NADPH--hemoprotein reductase] + O2 = (18R)-hydroxy-(5Z,8Z,11Z,14Z)-eicosatetraenoate + oxidized [NADPH--hemoprotein reductase] + H2O + H(+). It catalyses the reaction (4Z,7Z,10Z,13Z,16Z)-docosapentaenoate + reduced [NADPH--hemoprotein reductase] + O2 = 20-hydroxy-(4Z,7Z,10Z,13Z,16Z)-docosapentaenoate + oxidized [NADPH--hemoprotein reductase] + H2O + H(+). It carries out the reaction prostaglandin H1 + reduced [NADPH--hemoprotein reductase] + O2 = 19-hydroxyprostaglandin H1 + oxidized [NADPH--hemoprotein reductase] + H2O + H(+). The catalysed reaction is prostaglandin H2 + reduced [NADPH--hemoprotein reductase] + O2 = 19-hydroxyprostaglandin H2 + oxidized [NADPH--hemoprotein reductase] + H2O + H(+). The enzyme catalyses prostaglandin I2 + reduced [NADPH--hemoprotein reductase] + O2 = 19-hydroxy-prostaglandin I2 + oxidized [NADPH--hemoprotein reductase] + H2O + H(+). It catalyses the reaction (4Z,7Z,10Z,13Z,16Z,19Z)-docosahexaenoate + reduced [NADPH--hemoprotein reductase] + O2 = 10,11-epoxy-(4Z,7Z,13Z,16Z,19Z)-docosapentaenoate + oxidized [NADPH--hemoprotein reductase] + H2O + H(+). It carries out the reaction (4Z,7Z,10Z,13Z,16Z,19Z)-docosahexaenoate + reduced [NADPH--hemoprotein reductase] + O2 = 13,14-epoxy-(4Z,7Z,10Z,16Z,19Z)-docosapentaenoate + oxidized [NADPH--hemoprotein reductase] + H2O + H(+). The catalysed reaction is (4Z,7Z,10Z,13Z,16Z,19Z)-docosahexaenoate + reduced [NADPH--hemoprotein reductase] + O2 = 16,17-epoxy-(4Z,7Z,10Z,13Z,19Z)-docosapentaenoate + oxidized [NADPH--hemoprotein reductase] + H2O + H(+). The enzyme catalyses (4Z,7Z,10Z,13Z,16Z,19Z)-docosahexaenoate + reduced [NADPH--hemoprotein reductase] + O2 = 19,20-epoxy-(4Z,7Z,10Z,13Z,16Z)-docosapentaenoate + oxidized [NADPH--hemoprotein reductase] + H2O + H(+). It catalyses the reaction (7Z,10Z,13Z,16Z,19Z)-docosapentaenoate + reduced [NADPH--hemoprotein reductase] + O2 = 10,11-epoxy-(7Z,13Z,16Z,19Z)-docosatetraenoate + oxidized [NADPH--hemoprotein reductase] + H2O + H(+). It carries out the reaction (7Z,10Z,13Z,16Z,19Z)-docosapentaenoate + reduced [NADPH--hemoprotein reductase] + O2 = 13,14-epoxy-(7Z,10Z,16Z,19Z)-docosatetraenoate + oxidized [NADPH--hemoprotein reductase] + H2O + H(+). The catalysed reaction is (7Z,10Z,13Z,16Z,19Z)-docosapentaenoate + reduced [NADPH--hemoprotein reductase] + O2 = 16,17-epoxy-(7Z,10Z,13Z,19Z)-docosatetraenoate + oxidized [NADPH--hemoprotein reductase] + H2O + H(+). The enzyme catalyses (7Z,10Z,13Z,16Z,19Z)-docosapentaenoate + reduced [NADPH--hemoprotein reductase] + O2 = 19,20-epoxy-(7Z,10Z,13Z,16Z)-docosatetraenoate + oxidized [NADPH--hemoprotein reductase] + H2O + H(+). Its pathway is lipid metabolism; fatty acid metabolism. Its function is as follows. A cytochrome P450 monooxygenase involved in the metabolism of endogenous polyunsaturated fatty acids (PUFAs) and their oxygenated derivatives (oxylipins). Mechanistically, uses molecular oxygen inserting one oxygen atom into a substrate, and reducing the second into a water molecule, with two electrons provided by NADPH via cytochrome P450 reductase (CPR; NADPH-ferrihemoprotein reductase). Catalyzes the hydroxylation of carbon hydrogen bonds, with preference for omega-1 and omega-2 positions. Hydroxylates (5Z,8Z,11Z,14Z)-eicosatetraenoic acid (arachidonate) predominantly at omega-2 position to form (18R)-hydroxyeicosatetraenoic acid (18R-HETE). Exhibits omega-1 hydroxylase activity toward prostaglandin (PG) H1, PGH2 and PGI2. Catalyzes the epoxidation of double bonds of PUFAs, including docosahexaenoic and docosapentaenoic acids. Shows little activity against PGD2, PGE1, PGE2, PGF2alpha, and leukotriene B4. The sequence is that of Cytochrome P450 4F8 from Homo sapiens (Human).